The primary structure comprises 390 residues: MADQTAAAVVVGGGAAATMGEPSPPPPAPAAEAAGVGVGQQQRTVPTPFLTKTYQLVDDPAVDDVISWNDDGSTFVVWRPAEFARDLLPKYFKHNNFSSFVRQLNTYGFRKIVPDRWEFANDCFRRGERRLLCEIHRRKVTPPAPAATTAAVAAAIPMALPVTTTRDGSPVLSGEEQVISSSSSPEPPLVLPQAPSGSGSGGVASGDVGDENERLRRENAQLARELSQMRKLCNNILLLMSKYASTQQLDAANASSAAGNNNNNNCSGESAEAATPLPLPAVLDLMPSCPGAASAAAPVSDNEEGMMSAKLFGVSIGRKRMRHDGGGDDDHAATVKAEPMDGRPHGKDEQSAETQAWPIYRPRPVYQPIRACNGYEYDRAGSDQDGSNST.

The segment at 165–212 (TRDGSPVLSGEEQVISSSSSPEPPLVLPQAPSGSGSGGVASGDVGDEN) is disordered. Residues 206 to 237 (GDVGDENERLRRENAQLARELSQMRKLCNNIL) are a coiled coil. The hydrophobic repeat HR-A/B stretch occupies residues 215-244 (LRRENAQLARELSQMRKLCNNILLLMSKYA). The short motif at 318-322 (RKRMR) is the Nuclear localization signal element. The segment at 322–363 (RHDGGGDDDHAATVKAEPMDGRPHGKDEQSAETQAWPIYRPR) is disordered. A compositionally biased stretch (basic and acidic residues) spans 323–350 (HDGGGDDDHAATVKAEPMDGRPHGKDEQ).

This sequence belongs to the HSF family. Class B subfamily. In terms of assembly, homotrimer. Exhibits temperature-dependent phosphorylation.

It is found in the nucleus. In terms of biological role, transcriptional regulator that specifically binds DNA of heat shock promoter elements (HSE). This Oryza sativa subsp. japonica (Rice) protein is Heat stress transcription factor B-2b (HSFB2B).